The primary structure comprises 83 residues: uncharacterized protein (83 aa).

This is an uncharacterized protein from Rickettsia conorii (strain ATCC VR-613 / Malish 7).